A 463-amino-acid polypeptide reads, in one-letter code: Putative pentatricopeptide repeat-containing protein At4g17915 (463 aa).

12 PPR repeats span residues 12-46 (STRLLNICVDSLCKFRKLEKAESLIIDGIRLGVDP), 47-81 (DVVTYNTLISGYCRFVGIEEAYAVTRRMRDAGIRP), 82-116 (DVATYNSLIAGAARRLMLDHVLYLFDEMLEWGIYP), 117-152 (DLWSYNTLMCCYFKLGKHEEAFRVLYKDLQLAGLNP), 153-186 (GPDTYNVLLDALCKCGYIDNALELFKEMQSRFKP), 187-221 (ELMTYNILINGLCKSRRVGTAKWMLTELKKSGYTP), 222-256 (NAVTYTTILKLYFKTRRIRRGLQLFLEMKREGYTY), 257-291 (DGYAYFAVVSALIKTGRTKEAYEYMQELVRKGRRH), 292-326 (DIVSYNTLLNLYFKDGNLDAVDDLLGEIERRGMKA), 327-361 (DEYTHTIIVNGLLRTGQTRRAEEHFVSMGEMGIGL), 362-392 (NLVTCNCLVDGLCKAGHVDRAMRYFESMEVK), and 393-427 (DEYTYTSVVHNLCKDMRFVCASKLLLSCYNKGIKI).

Belongs to the PPR family. P subfamily.

The chain is Putative pentatricopeptide repeat-containing protein At4g17915 from Arabidopsis thaliana (Mouse-ear cress).